The chain runs to 634 residues: uncharacterized protein (634 aa).

A signal peptide spans 1 to 40 (MWLQQRLKGLPGLLSSSWARRLLCLLGLLVLLLWFASSGA). At 41-589 (RRAAGGLHLP…DEHMAQQDPG (549 aa)) the chain is on the extracellular side. An N-linked (GlcNAc...) asparagine glycan is attached at Asn363. The chain crosses the membrane as a helical span at residues 590 to 610 (LPFLFWFSVASLITLFHLFLF). Residues 611 to 634 (KLIYNEYCGPGAKPLFRSKEDPSV) are Cytoplasmic-facing.

It localises to the membrane. This is an uncharacterized protein from Mus musculus (Mouse).